The sequence spans 466 residues: MQLAGKRALVMGLGVHGGGTGVARFLALQGADVTVTDLRGPDDLRASLDALAGLPIRFVLGEHRDDDFRRAEIVVRNPAVPPNSRYLQIARAAGATIEMEMTIFFRLCPGPILGVTGTKGKTTTTLLLGAMLREQFPDTVIAGNLRISALEQLPTITATTPVVLELSSFALEGLGEAGLSPKIACITTIAPDHLDRHGTMEAYILAKEQIWRHQRPGDAVALNADSPIIRAMAVVEQRPDDVVWFASAAHPALAHAGRAAFWQGDELVWRDHRGGRHVICTRDDVQLRGTHNLGNIAAATAAACSFGVAPDHIRRAVQTFPGVEHRLELVRELDGVRYVNDTAATAPEAAIAALRTFDDPIVLIAGGADKQLPFDDLAREIAGRVKAVVLVDGTATPKLQRALRLVDPSVDVCGPFDDFERAVIAARHIAAPGDIVLLSPGCASFGMFRNEFHRGEAFRRIVESFT.

Residue 117–123 (GTKGKTT) participates in ATP binding.

Belongs to the MurCDEF family.

It localises to the cytoplasm. It carries out the reaction UDP-N-acetyl-alpha-D-muramoyl-L-alanine + D-glutamate + ATP = UDP-N-acetyl-alpha-D-muramoyl-L-alanyl-D-glutamate + ADP + phosphate + H(+). It participates in cell wall biogenesis; peptidoglycan biosynthesis. Cell wall formation. Catalyzes the addition of glutamate to the nucleotide precursor UDP-N-acetylmuramoyl-L-alanine (UMA). The chain is UDP-N-acetylmuramoylalanine--D-glutamate ligase from Roseiflexus sp. (strain RS-1).